The primary structure comprises 434 residues: APETALA2-like protein 2 (434 aa).

The segment at 1 to 116 (MLLDLNVESP…KTRRGPRSRS (116 aa)) is disordered. The span at 12–23 (RSGTSSSSVLNS) shows a compositional bias: low complexity. The span at 25–38 (DAGGGGGGGGGGGL) shows a compositional bias: gly residues. Residues 72-87 (LPPPPPAAPSPAPAWQ) show a composition bias toward pro residues. The span at 104–113 (VAKKTRRGPR) shows a compositional bias: basic residues. Residues 106–115 (KKTRRGPRSR) carry the Nuclear localization signal motif. DNA-binding regions (AP2/ERF) lie at residues 118-174 (QYRG…INFN) and 210-267 (KFRG…TNFE). The short motif at 291-295 (LDLRI) is the EAR element.

The protein belongs to the AP2/ERF transcription factor family. AP2 subfamily. In terms of assembly, may form homodimer. Interacts with TPR2/ASP1.

The protein resides in the nucleus. Its function is as follows. Probable transcription factor. Involved in spikelet transition. Together with SNB, controls synergistically inflorescence architecture and floral meristem establishment via the regulation of spatio-temporal expression of B- and E-function floral organ identity genes in the lodicules and of spikelet meristem genes. Prevents lemma and palea elongation as well as grain growth. The polypeptide is APETALA2-like protein 2 (Oryza sativa subsp. indica (Rice)).